We begin with the raw amino-acid sequence, 203 residues long: Pyridoxal 5'-phosphate synthase subunit PdxT (203 aa).

L-glutamine is bound at residue 49–51 (GES). Residue cysteine 81 is the Nucleophile of the active site. L-glutamine-binding positions include arginine 110 and 139 to 140 (IR). Catalysis depends on charge relay system residues histidine 175 and glutamate 177.

Belongs to the glutaminase PdxT/SNO family. In terms of assembly, in the presence of PdxS, forms a dodecamer of heterodimers. Only shows activity in the heterodimer.

The enzyme catalyses aldehydo-D-ribose 5-phosphate + D-glyceraldehyde 3-phosphate + L-glutamine = pyridoxal 5'-phosphate + L-glutamate + phosphate + 3 H2O + H(+). It carries out the reaction L-glutamine + H2O = L-glutamate + NH4(+). It participates in cofactor biosynthesis; pyridoxal 5'-phosphate biosynthesis. Its function is as follows. Catalyzes the hydrolysis of glutamine to glutamate and ammonia as part of the biosynthesis of pyridoxal 5'-phosphate. The resulting ammonia molecule is channeled to the active site of PdxS. This Parafrankia sp. (strain EAN1pec) protein is Pyridoxal 5'-phosphate synthase subunit PdxT.